The following is a 185-amino-acid chain: Ribosome hibernation promotion factor (185 aa).

Positions Met-1 to Glu-125 are probably still associates with ribosome. Residues Asp-126–Glu-185 are required but not sufficient to restore ribosome dimerization, in vitro will replace E.coli RMF in ribosome dimerization.

The protein belongs to the HPF/YfiA ribosome-associated protein family. Long HPF subfamily. As to quaternary structure, interacts with 100S ribosomes in stationary phase; alters the relative position of the 30S and 50S subunits.

It is found in the cytoplasm. Functionally, required for dimerization of active 70S ribosomes into 100S ribosomes in stationary phase; 100S ribosomes are translationally inactive and sometimes present during exponential growth. Able to dimerize E.coli 70S ribosomes in vitro. This Lactococcus lactis subsp. cremoris (strain MG1363) protein is Ribosome hibernation promotion factor.